A 468-amino-acid polypeptide reads, in one-letter code: 6-phosphogluconate dehydrogenase, decarboxylating (468 aa).

NADP(+) is bound by residues 9-14 (GLAVMG), 32-34 (NRS), 73-75 (VQA), and asparagine 101. Residues asparagine 101 and 127-129 (SGG) each bind substrate. Catalysis depends on lysine 182, which acts as the Proton acceptor. 185–186 (HN) serves as a coordination point for substrate. The Proton donor role is filled by glutamate 189. Positions 190, 259, 286, 444, and 450 each coordinate substrate.

This sequence belongs to the 6-phosphogluconate dehydrogenase family. In terms of assembly, homodimer.

The enzyme catalyses 6-phospho-D-gluconate + NADP(+) = D-ribulose 5-phosphate + CO2 + NADPH. The protein operates within carbohydrate degradation; pentose phosphate pathway; D-ribulose 5-phosphate from D-glucose 6-phosphate (oxidative stage): step 3/3. Catalyzes the oxidative decarboxylation of 6-phosphogluconate to ribulose 5-phosphate and CO(2), with concomitant reduction of NADP to NADPH. The polypeptide is 6-phosphogluconate dehydrogenase, decarboxylating (gnd) (Staphylococcus aureus (strain COL)).